Reading from the N-terminus, the 211-residue chain is Large ribosomal subunit protein uL4 (211 aa).

The disordered stretch occupies residues Gln-40–Gly-85. The segment covering Gln-41–Arg-54 has biased composition (polar residues). The segment covering Gly-60–Gly-71 has biased composition (basic residues).

The protein belongs to the universal ribosomal protein uL4 family. In terms of assembly, part of the 50S ribosomal subunit.

Functionally, one of the primary rRNA binding proteins, this protein initially binds near the 5'-end of the 23S rRNA. It is important during the early stages of 50S assembly. It makes multiple contacts with different domains of the 23S rRNA in the assembled 50S subunit and ribosome. In terms of biological role, forms part of the polypeptide exit tunnel. This is Large ribosomal subunit protein uL4 from Synechococcus sp. (strain CC9311).